Consider the following 355-residue polypeptide: Protein-glutamate methylesterase/protein-glutamine glutaminase 3 (355 aa).

The Response regulatory domain maps to 8–123; that stretch reads SVLIVDDSGM…AREVEDFVDK (116 aa). Asp-59 carries the post-translational modification 4-aspartylphosphate. Residues 139–161 are disordered; the sequence is RSAPAAGPTPVPQAPPPPAAPPA. Over residues 145–159 the composition is skewed to pro residues; that stretch reads GPTPVPQAPPPPAAP. The region spanning 160–350 is the CheB-type methylesterase domain; the sequence is PAGDGGIIAI…ASLLEITGAS (191 aa). Catalysis depends on residues Ser-172, His-199, and Asp-292.

The protein belongs to the CheB family. In terms of processing, phosphorylated by CheA. Phosphorylation of the N-terminal regulatory domain activates the methylesterase activity.

It localises to the cytoplasm. The catalysed reaction is [protein]-L-glutamate 5-O-methyl ester + H2O = L-glutamyl-[protein] + methanol + H(+). The enzyme catalyses L-glutaminyl-[protein] + H2O = L-glutamyl-[protein] + NH4(+). In terms of biological role, involved in chemotaxis. Part of a chemotaxis signal transduction system that modulates chemotaxis in response to various stimuli. Catalyzes the demethylation of specific methylglutamate residues introduced into the chemoreceptors (methyl-accepting chemotaxis proteins or MCP) by CheR. Also mediates the irreversible deamidation of specific glutamine residues to glutamic acid. The protein is Protein-glutamate methylesterase/protein-glutamine glutaminase 3 of Paramagnetospirillum magneticum (strain ATCC 700264 / AMB-1) (Magnetospirillum magneticum).